The sequence spans 882 residues: DNA mismatch repair protein MutS (882 aa).

627–634 (GPNMAGKS) serves as a coordination point for ATP.

Belongs to the DNA mismatch repair MutS family.

This protein is involved in the repair of mismatches in DNA. It is possible that it carries out the mismatch recognition step. This protein has a weak ATPase activity. This chain is DNA mismatch repair protein MutS, found in Anaeromyxobacter dehalogenans (strain 2CP-C).